A 522-amino-acid chain; its full sequence is Flavin-dependent halogenase armH1 (522 aa).

FAD contacts are provided by glycine 16, alanine 19, and glutamate 49. The chloride site is built by serine 328 and glycine 329. Isoleucine 330 serves as a coordination point for FAD.

This sequence belongs to the flavin-dependent halogenase family.

It carries out the reaction melleolide F + FADH2 + chloride + O2 = 6'-chloromelleolide F + FAD + 2 H2O + H(+). In terms of biological role, flavin-dependent halogenase involved in the biosynthesis of melleolides, a range of antifungal and phytotoxic polyketide derivatives composed of an orsellinic acid (OA) moiety esterified to various sesquiterpene alcohols. The halogenase catalyzes the transfer of a single chlorine atom to the melleolide backbone, resulting in a 6'-chloromelleolide product. The enzyme acts on free substrate and does not depend on carrier-protein-dependent acceptor molecules. This chain is Flavin-dependent halogenase armH1, found in Armillaria mellea (Honey mushroom).